The following is a 203-amino-acid chain: MRGKFICLDGTEGSGKSSQIQAICSFLQQHGKTVITTREPGGTQIGEAIRELVLSPHYQPQALTELLLILAARHEHLQTVILPHLAAGTWVISDRFNDATYAYQGYGRGIDLKIIKTLEQIIQASFQPDLACILCLPEHIAAERVHNRAHDHDRIELENRAFFARVAQGYHARAQLPHARFIDASGDQNSVFQQIRHHLELLL.

Residue 10–17 (GTEGSGKS) participates in ATP binding.

This sequence belongs to the thymidylate kinase family.

It catalyses the reaction dTMP + ATP = dTDP + ADP. Functionally, phosphorylation of dTMP to form dTDP in both de novo and salvage pathways of dTTP synthesis. The protein is Thymidylate kinase of Dichelobacter nodosus (strain VCS1703A).